The following is a 1823-amino-acid chain: WD repeat-containing protein DDB_G0292056 (1823 aa).

The disordered stretch occupies residues 1-68 (MTYNNNNNYL…IGNSSGGGGV (68 aa)). Residues 16–61 (TSTSTSTSTSTPTSTKTSPLNTSSSSNILKSNSRNPSPNNPTNIGN) show a composition bias toward low complexity. WD repeat units follow at residues 138–177 (QSKW…YPLL), 182–222 (SHQR…KAVK), 228–267 (SHIL…QELN), 270–310 (VHSA…PKST), 312–354 (ITSN…YSTP), and 360–405 (GHTD…KDLF). 9 disordered regions span residues 418 to 461 (PTTT…LLST), 530 to 562 (QPDD…NNNN), 649 to 687 (NITE…GFLK), 714 to 778 (IDIS…YRPG), 805 to 840 (ILTN…TNDQ), 883 to 940 (IPNN…SSTS), 966 to 996 (SSSS…NPPR), 1014 to 1058 (NNIT…NDNP), and 1122 to 1186 (QQLV…NGKS). Low complexity-rich tracts occupy residues 419–432 (TTTT…TTTT) and 440–461 (LNES…LLST). Low complexity-rich tracts occupy residues 654–680 (NNNN…NNNN) and 717–748 (SQQQ…QQQQ). Polar residues-rich tracts occupy residues 749-768 (FLTA…SPTS) and 827-840 (MNAS…TNDQ). Low complexity-rich tracts occupy residues 885–926 (NNNK…SSNN), 966–993 (SSSS…KNIN), 1014–1041 (NNIT…NRLN), and 1127–1183 (SSSP…NNGN). The WD 7 repeat unit spans residues 1207-1250 (ANSYILSGKPVEEICKYNSELAEKENRKDLVKLWNTLGMITDSK). Disordered regions lie at residues 1264–1307 (SHFG…LHQS), 1697–1725 (QQQP…HTHN), and 1764–1823 (PQQE…MFSN). Residues 1282–1293 (STGIASSTGSNS) are compositionally biased toward low complexity. A compositionally biased stretch (polar residues) spans 1710–1725 (MSGTSHYHQQQPHTHN).

The protein is WD repeat-containing protein DDB_G0292056 of Dictyostelium discoideum (Social amoeba).